Reading from the N-terminus, the 146-residue chain is Hemoglobin subunit beta (146 aa).

Residues 2–146 form the Globin domain; it reads PFSAHEEKLI…VAAALSAEYH (145 aa). Heme b contacts are provided by His-63 and His-92.

The protein belongs to the globin family. As to quaternary structure, heterotetramer of two alpha chains and two beta chains. Red blood cells.

Involved in oxygen transport from the lung to the various peripheral tissues. This Caiman crocodilus (Spectacled caiman) protein is Hemoglobin subunit beta (HBB).